Reading from the N-terminus, the 347-residue chain is 4-hydroxy-2-oxovalerate aldolase 1 (347 aa).

A Pyruvate carboxyltransferase domain is found at 8–261 (VTLYDMSLLX…ETGIDLYKIM (254 aa)). His-20 acts as the Proton acceptor in catalysis. Substrate contacts are provided by Ser-171 and His-200. 2 residues coordinate Mn(2+): His-200 and His-202. Position 291 (Tyr-291) interacts with substrate.

It belongs to the 4-hydroxy-2-oxovalerate aldolase family.

The enzyme catalyses (S)-4-hydroxy-2-oxopentanoate = acetaldehyde + pyruvate. In Metapseudomonas furukawaii (Pseudomonas furukawaii), this protein is 4-hydroxy-2-oxovalerate aldolase 1 (salH).